Here is a 489-residue protein sequence, read N- to C-terminus: Adenosylhomocysteinase (489 aa).

Substrate-binding residues include threonine 68, aspartate 151, and glutamate 213. Threonine 214–threonine 216 is a binding site for NAD(+). Residues lysine 243 and aspartate 247 each coordinate substrate. NAD(+) is bound by residues asparagine 248, glycine 277–glycine 282, glutamate 300, asparagine 335, isoleucine 356–histidine 358, and asparagine 403.

It belongs to the adenosylhomocysteinase family. Requires NAD(+) as cofactor.

It is found in the cytoplasm. It carries out the reaction S-adenosyl-L-homocysteine + H2O = L-homocysteine + adenosine. Its pathway is amino-acid biosynthesis; L-homocysteine biosynthesis; L-homocysteine from S-adenosyl-L-homocysteine: step 1/1. May play a key role in the regulation of the intracellular concentration of adenosylhomocysteine. The chain is Adenosylhomocysteinase from Mycobacterium sp. (strain KMS).